Reading from the N-terminus, the 112-residue chain is MAM and fibronectin type III domain-containing protein 2 (112 aa).

As to expression, component of the acid-insoluble and acid-soluble organic matrix of the aragonitic skeleton (at protein level).

It localises to the secreted. The polypeptide is MAM and fibronectin type III domain-containing protein 2 (Acropora millepora (Staghorn coral)).